The primary structure comprises 468 residues: MSKSVQLIKDHDVKWIDLRFTDTKGTQHHVTMPARDALEDDFFEVGKMFDGSSIAGWKGIEASDMILLPDDDTAVLDPFTEDATLILVCDIIEPSTMQGYDRDPRAIAHRAEEYLKTTGIGDTVFAGPEPEFFIFDEVKFKSDISGSMFKIYSEQGSWMSDQDIEGGNKGHRPGVKGGYFPVPPFDHDHEIRTAMCNALEEMGQTVEVHHHEVATAGQNEIGVKFNTLVKKADEVQTLKYVVHNVADAYGRTATFMPKPLYGDNGSGMHVHMSIAKDGKNTFAGEGYAGLSETALYFIGGIIKHGKALNGFTNPATNSYKRLVPGFEAPVMLAYSARNRSASIRIPYVNSPRGRRIEARFPDPAANPYLAFAALLMAGLDGIQNKIHPGDAADKNLYDLPPEEAKEIPQVCGSLKEALEELDKGRAFLTKGGVFSDDFIDAYIALKSEEEIKVRTFVHPLEYELYYSC.

Positions 11–96 constitute a GS beta-grasp domain; that stretch reads HDVKWIDLRF…LVCDIIEPST (86 aa). Residues 104–468 form the GS catalytic domain; it reads PRAIAHRAEE…PLEYELYYSC (365 aa). Residues E129 and E131 each coordinate Mg(2+). E207 contacts ATP. Residues E212 and E220 each contribute to the Mg(2+) site. L-glutamate contacts are provided by residues 264 to 265 and G265; that span reads NG. H269 lines the Mg(2+) pocket. Residues 271–273 and S273 contribute to the ATP site; that span reads HMS. L-glutamate contacts are provided by R321, E327, and R339. Residues R339, R344, and R352 each contribute to the ATP site. E357 lines the Mg(2+) pocket. R359 provides a ligand contact to L-glutamate. Y397 bears the O-AMP-tyrosine mark.

It belongs to the glutamine synthetase family. In terms of assembly, oligomer of 12 subunits arranged in the form of two hexagons. Mg(2+) serves as cofactor. Requires Mn(2+) as cofactor.

The enzyme catalyses L-glutamate + NH4(+) + ATP = L-glutamine + ADP + phosphate + H(+). When cellular nitrogen levels are high, the C-terminal adenylyl transferase (AT) of GlnE inhibits GlnA by covalent transfer of an adenylyl group from ATP to Tyr-397. Conversely, when nitrogen levels are low, the N-terminal adenylyl removase (AR) of GlnE activates GlnA by removing the adenylyl group by phosphorolysis. The fully adenylated enzyme complex is inactive. In terms of biological role, catalyzes the formation of glutamine from glutamate and ammonia. In vitro, can also use hydroxylamine, methylamine and ethylamine, with 32%, 7% and 1% activity compared to ammonia, respectively. This Pseudomonas taetrolens protein is Glutamine synthetase.